The sequence spans 297 residues: Protein BCCIP homolog (297 aa).

The disordered stretch occupies residues 1 to 40; it reads MSANKQKKLSTMEVDPNEDVSSSSEDDDDDEPHPDAYKGN.

This sequence belongs to the BCP1 family.

This Drosophila melanogaster (Fruit fly) protein is Protein BCCIP homolog.